The following is a 194-amino-acid chain: Lytic chitin monooxygenase (194 aa).

An N-terminal signal peptide occupies residues 1 to 28 (MKKSLLTIVLAFSFVLGGAALAPTVSEA). Positions 29 and 114 each coordinate Cu cation. The Chitin-binding type-4 domain maps to 29–191 (HGYVASPGSR…VNAFYQAIDV (163 aa)).

Cu(2+) is required as a cofactor.

The protein localises to the secreted. The enzyme catalyses [(1-&gt;4)-N-acetyl-beta-D-glucosaminyl]n+m + reduced acceptor + O2 = [(1-&gt;4)-N-acetyl-beta-D-glucosaminyl]m-1-(1-&gt;4)-2-(acetylamino)-2-deoxy-D-glucono-1,5-lactone + [(1-&gt;4)-N-acetyl-beta-D-glucosaminyl]n + acceptor + H2O.. It functions in the pathway glycan degradation; chitin degradation. Functionally, involved in chitin degradation. Catalyzes the oxidative cleavage of glycosidic bonds in both alpha- and beta-chitin via a copper-dependent mechanism, leading to oxidized chitooligosaccharides with a dominance of even-numbered products. Acts synergistically with the chitinase EfChi18A, and combining the two enzymes leads to rapid and complete depolymerization of crystalline chitin, especially with beta-chitin as a substrate. Is likely involved in a chitin degradation pathway that allows E.faecalis V583 to grow on chitin as a carbon source. In Enterococcus faecalis (strain ATCC 700802 / V583), this protein is Lytic chitin monooxygenase.